The sequence spans 291 residues: Polyamine aminopropyltransferase (291 aa).

One can recognise a PABS domain in the interval 5-245 (PGPIVLMEPL…YAVNFVLGSL (241 aa)). Q36 serves as a coordination point for S-methyl-5'-thioadenosine. 2 residues coordinate spermidine: H67 and E91. Residues D111 and 143–144 (DG) contribute to the S-methyl-5'-thioadenosine site. D164 (proton acceptor) is an active-site residue.

The protein belongs to the spermidine/spermine synthase family. In terms of assembly, homodimer or homotetramer.

It is found in the cytoplasm. It carries out the reaction norspermidine + S-adenosyl 3-(methylsulfanyl)propylamine = norspermine + S-methyl-5'-thioadenosine + H(+). The catalysed reaction is S-adenosyl 3-(methylsulfanyl)propylamine + spermidine = thermospermine + S-methyl-5'-thioadenosine + H(+). Its function is as follows. Involved in the biosynthesis of polyamines which are thought to support the growth of thermophilic microorganisms under high-temperature conditions. It seems that long-chain and branched-chain of polyamines effectively stabilize DNA and RNA, respectively. Catalyzes the irreversible transfer of a propylamine group from the amino donor S-adenosylmethioninamine (decarboxy-AdoMet) to norspermidine and 1,3-diaminopropane to yield norspermine, and to spermidine to yield thermospermine. It can also synthesize thermospermine from putrescine (1,4-diaminobutane) and caldopentamine from norspermine with a very low activity. The biosynthesis of caldohexamine and caldoheptamine from caldopentamine has been also observed. The chain is Polyamine aminopropyltransferase from Pyrobaculum aerophilum (strain ATCC 51768 / DSM 7523 / JCM 9630 / CIP 104966 / NBRC 100827 / IM2).